The primary structure comprises 419 residues: Protein indeterminate-domain 14 (419 aa).

The interval 1-58 (MIDYERSNTTKNINTHHHNPPPSSSSSDLLPDGNGTAVTQKRKRRPAGTPDPEAEVVS) is disordered. C2H2-type zinc fingers lie at residues 70 to 92 (YVCEICNQGFQRDQNLQMHRRRH), 112 to 142 (YVCPEPTCLHHNPCHALGDLVGIKKHFRRKH), and 148 to 175 (WICERCSKGYAVQSDYKAHLKTCGTRGH). 8 residues coordinate Zn(2+): Cys-150, Cys-153, His-166, Cys-170, Cys-177, Cys-179, His-192, and Cys-196. The segment at 175-198 (HSCDCGRVFSRVESFIEHQDTCTV) adopts a CCHC-type 2; atypical zinc-finger fold. An SHR-binding region spans residues 185–197 (RVESFIEHQDTCT). Disordered stretches follow at residues 200–259 (RSQP…PSTL) and 298–318 (SEVEKKSYEKGETSLEREEAR). 2 stretches are compositionally biased toward low complexity: residues 213–230 (QHTTNATQTASTAENNEN) and 246–259 (RRQSPPSEQQPSTL). A coiled-coil region spans residues 313 to 349 (EREEARRETKRQIEIAELEFAEAKRIRQHARAELHKA).

In terms of assembly, homo- and heterodimer of IDD14alpha and IDD14beta. In terms of tissue distribution, expressed in cotyledons and the vasculature of reosette leaves. Weak expression in hypocotyls and floral organs, but not detected in roots and inflorescence stems.

The protein localises to the nucleus. Functionally, transcription factor regulating starch metabolism by binding directly to the promoter of QQS. The IDD14beta isoform attenuates the transcription factor activity by competitively forming heterodimers with reduced DNA-binding capacity. Regulates lateral organ morphogenesis and gravitropic responses. Has a redundant role with IDD16 in directing leaf and floral organ morphogenesis. Involved in the establishment of auxin gradients through the regulation of auxin biosynthesis and transport. The sequence is that of Protein indeterminate-domain 14 from Arabidopsis thaliana (Mouse-ear cress).